The chain runs to 142 residues: Inner membrane protein YqaA (142 aa).

Residues 1–2 (MS) lie on the Cytoplasmic side of the membrane. A helical transmembrane segment spans residues 3–23 (EALSLFSLFASSFLSATLLPG). Over 24–26 (NSE) the chain is Periplasmic. A helical membrane pass occupies residues 27–47 (VVLVAMLLSGISHPWVLVLTA). Over 48–86 (TMGNSLGGLTNVILGRFFPLRKTSRWQEKATGWLKRYGA) the chain is Cytoplasmic. Residues 87–107 (VTLLLSWMPVVGDLLCLLAGW) traverse the membrane as a helical segment. Topologically, residues 108–142 (MRISWGPVIFFLCLGKALRYVAVAAATVQGMMWWH) are periplasmic.

The protein to H.influenzae HI_0489.

The protein localises to the cell inner membrane. This Escherichia coli (strain K12) protein is Inner membrane protein YqaA (yqaA).